The chain runs to 89 residues: Small ribosomal subunit protein uS15 (89 aa).

Belongs to the universal ribosomal protein uS15 family. As to quaternary structure, part of the 30S ribosomal subunit. Forms a bridge to the 50S subunit in the 70S ribosome, contacting the 23S rRNA.

In terms of biological role, one of the primary rRNA binding proteins, it binds directly to 16S rRNA where it helps nucleate assembly of the platform of the 30S subunit by binding and bridging several RNA helices of the 16S rRNA. Its function is as follows. Forms an intersubunit bridge (bridge B4) with the 23S rRNA of the 50S subunit in the ribosome. The polypeptide is Small ribosomal subunit protein uS15 (Arthrobacter sp. (strain FB24)).